A 410-amino-acid chain; its full sequence is Phosphoglycerate kinase (410 aa).

Residues 19–21, Arg34, 57–60, Arg114, and Arg154 contribute to the substrate site; these read DLN and HQGK. Residues Glu332 and 358–361 contribute to the ATP site; that span reads GGHS.

Belongs to the phosphoglycerate kinase family. Homodimer.

Its subcellular location is the cytoplasm. The catalysed reaction is (2R)-3-phosphoglycerate + ATP = (2R)-3-phospho-glyceroyl phosphate + ADP. It participates in carbohydrate degradation; glycolysis; pyruvate from D-glyceraldehyde 3-phosphate: step 2/5. The polypeptide is Phosphoglycerate kinase (pgk) (Pyrococcus abyssi (strain GE5 / Orsay)).